Reading from the N-terminus, the 400-residue chain is Ribosomal RNA dihydrouridine synthase (400 aa).

Positions 14, 33, 34, 40, 46, 51, 131, 367, and 380 each coordinate FAD.

Belongs to the BaiN/RdsA family. RdsA subfamily. FAD serves as cofactor.

The enzyme catalyses a 5,6-dihydrouridine in mRNA + NAD(+) = a uridine in mRNA + NADH + H(+). Catalyzes the synthesis of 5,6-dihydrouridine (D) at position 2449 in 23S rRNA. Can use NADH as a source of reducing equivalents but not NADPH. The sequence is that of Ribosomal RNA dihydrouridine synthase from Escherichia coli (strain K12).